A 443-amino-acid chain; its full sequence is Threonine/serine transporter TdcC (443 aa).

11 helical membrane passes run 22–42 (TTWTLGLFGTAIGAGVLFFPI), 44–64 (AGFGGLIPILLMLVLAYPIAF), 97–117 (GVVITFLYFFAICPLLWIYGV), 140–160 (FVALFLLLLMAFVIWFGKDLM), 163–183 (VMSFLVFPFIASLILISLSLI), 207–227 (ILVTVWLGISIMVFSFNFSPI), 259–279 (ASLLMVAVVMFFAFSCLFTLS), 319–339 (ASIIALVAIFKSFFGHYLGTL), 366–386 (ISMIFIMGSTWVVAYANPNIL), 389–409 (IEAMGAPIIASLLCLLPMFAI), and 423–443 (ENLFVTAVGLLTILNIVYKLF).

The protein belongs to the amino acid/polyamine transporter 2 family. SdaC/TdcC subfamily.

Its subcellular location is the cell inner membrane. The catalysed reaction is L-threonine(in) + H(+)(in) = L-threonine(out) + H(+)(out). It carries out the reaction L-serine(in) + H(+)(in) = L-serine(out) + H(+)(out). Its function is as follows. Involved in the import of threonine and serine into the cell, with the concomitant import of a proton (symport system). The sequence is that of Threonine/serine transporter TdcC from Enterobacter sp. (strain 638).